A 147-amino-acid chain; its full sequence is Globin, major polymeric component P1 (147 aa).

The Globin domain maps to 2–146; the sequence is HLTADQVAAL…ISDACIAGLQ (145 aa). His-96 lines the heme b pocket.

This sequence belongs to the globin family. Polymer.

This is Globin, major polymeric component P1 from Glycera dibranchiata (Bloodworm).